We begin with the raw amino-acid sequence, 141 residues long: Hemoglobin subunit alpha-1/2 (141 aa).

One can recognise a Globin domain in the interval 1–141; sequence VLSPADKTNV…VSTVLTSKYR (141 aa). S3 carries the phosphoserine modification. K7 carries the N6-succinyllysine modification. Position 8 is a phosphothreonine (T8). K11 carries the post-translational modification N6-succinyllysine. K16 carries the N6-acetyllysine; alternate modification. K16 is subject to N6-succinyllysine; alternate. Position 24 is a phosphotyrosine (Y24). An N6-succinyllysine modification is found at K40. A Phosphoserine modification is found at S49. H58 contributes to the O2 binding site. Residue H87 participates in heme b binding. The residue at position 102 (S102) is a Phosphoserine. The residue at position 108 (T108) is a Phosphothreonine. S124 is subject to Phosphoserine. Residues T134 and T137 each carry the phosphothreonine modification. S138 is modified (phosphoserine).

This sequence belongs to the globin family. In terms of assembly, heterotetramer of two alpha chains and two beta chains. In terms of tissue distribution, red blood cells.

Its function is as follows. Involved in oxygen transport from the lung to the various peripheral tissues. The polypeptide is Hemoglobin subunit alpha-1/2 (Leptonychotes weddellii (Weddell seal)).